Here is a 1692-residue protein sequence, read N- to C-terminus: Regulating synaptic membrane exocytosis protein 1 (1692 aa).

Residues 1–26 (MSSAVGPRGPRPPTVPPPMQELPDLS) are disordered. Positions 9–20 (GPRPPTVPPPMQ) are enriched in pro residues. The RabBD domain occupies 22–182 (LPDLSHLTEE…TKSGAWFFGS (161 aa)). An FYVE-type zinc finger spans residues 110 to 170 (KDDAPTCGIC…VCNLCRKQQE (61 aa)). 8 residues coordinate Zn(2+): C116, C119, C132, C135, C140, C143, C162, and C165. A compositionally biased stretch (polar residues) spans 183–199 (GPQQTSQDGTLSDTATG). Residues 183 to 555 (GPQQTSQDGT…CEDVELESES (373 aa)) are disordered. Positions 204–217 (VPREKKARLQERSR) are enriched in basic and acidic residues. A compositionally biased stretch (low complexity) spans 223-234 (STAAASSQDAAP). Over residues 305–357 (VEERERKERRESRRLEKGRSQDYPDTPEKRDEGKAADEEKQRKEEDYQTRYRS) the composition is skewed to basic and acidic residues. The segment covering 377–388 (MHARVSRARHER) has biased composition (basic residues). Over residues 412-430 (RAPAAARASPPDSPRAYSA) the composition is skewed to low complexity. The span at 462–475 (PELKAQEPLRKQSR) shows a compositional bias: basic and acidic residues. Residues 497 to 509 (RNDSLSSDQSESV) are compositionally biased toward polar residues. Phosphoserine is present on S500. Positions 515 to 527 (KPHRSKRGGKKRQ) are enriched in basic residues. The segment covering 545-555 (SCEDVELESES) has biased composition (acidic residues). A Phosphoserine modification is found at S578. The 87-residue stretch at 605 to 691 (RTTMPKDSGA…EPQVEIIVSR (87 aa)) folds into the PDZ domain. The interval 698-732 (RIPESSHPPLESSSSSFESQKMERPSISVISPTSP) is disordered. Positions 700–716 (PESSHPPLESSSSSFES) are enriched in low complexity. A phosphoserine mark is found at S728 and S731. Positions 742 to 865 (LPGQLSVKLW…ALLDDEPHWY (124 aa)) constitute a C2 1 domain. The interval 870-1013 (HDESSLPLPQ…RTRDVDSQYL (144 aa)) is disordered. S881 carries the post-translational modification Phosphoserine. A compositionally biased stretch (polar residues) spans 935 to 944 (STTLTVPEQQ). S977 carries the phosphoserine modification. The segment covering 992 to 1009 (RHHDASRSPVDHRTRDVD) has biased composition (basic and acidic residues). Phosphoserine is present on S1031. 2 disordered regions span residues 1118–1222 (NCLR…EHSS) and 1235–1278 (GGSA…PVRS). Basic and acidic residues-rich tracts occupy residues 1128-1144 (SPERERGRWSPSLDRRR) and 1157-1170 (PENDRHSRKSERSS). S1252 carries the post-translational modification Phosphoserine. A compositionally biased stretch (polar residues) spans 1252-1265 (SPTQSPPADTSFSS). The residue at position 1254 (T1254) is a Phosphothreonine. Phosphoserine occurs at positions 1256, 1308, 1310, 1311, 1339, 1340, and 1342. Disordered stretches follow at residues 1332-1394 (CDNV…SGRS), 1408-1428 (LEHNDGSQSDTAVGTVGAGGK), and 1445-1495 (RSRS…GSIN). The span at 1345–1366 (SDVSAISRTSSASRLSSTSFMS) shows a compositional bias: low complexity. S1416 carries the post-translational modification Phosphoserine. Positions 1477 to 1490 (EMRKMVRQPSREST) are enriched in basic and acidic residues. The region spanning 1538-1656 (AMGDIQIGME…DLSSMVIGWY (119 aa)) is the C2 2 domain. Phosphoserine occurs at positions 1677, 1680, 1683, and 1692.

As to quaternary structure, binds RAB3A, RAB3B and RAB3D that have been activated by GTP-binding. Interacts with RAB3C, RAB10, RAB26 and RAB37. Binds UNC13A. Interacts with TSPOAP1 and RIMBP2. Interacts with PPFIA3 and PPFIA4. Interacts with ERC1. Binds SNAP25, SYT1 and CACNA1B. Interaction with SYT1 is enhanced by calcium ions. Interaction with SNAP25 is weaker in the presence of calcium ions. In terms of processing, phosphorylated by BRSK1. In terms of tissue distribution, expressed in melanocytes. Detected in brain and retina.

The protein localises to the cell membrane. Its subcellular location is the synapse. It is found in the presynaptic cell membrane. Functionally, rab effector involved in exocytosis. May act as scaffold protein that regulates neurotransmitter release at the active zone. Essential for maintaining normal probability of neurotransmitter release and for regulating release during short-term synaptic plasticity. Plays a role in dendrite formation by melanocytes. This Homo sapiens (Human) protein is Regulating synaptic membrane exocytosis protein 1 (RIMS1).